The primary structure comprises 249 residues: MWYLLLPTALLLTVSSGVGAGLQKAVVNLDPEWVRVLEEDCVILRCQGTFSPEDNSTKWFHNKSLISHQDANYVIQSARVKDSGMYRCQTAFSALSDPVQLDVHADWLLLQTTKRLFQEGDPIRLRCHSWRNTPVFKVTYLQNGKGKKYFHRNSELSISKATHADSGSYFCRGIIGRNNISSASLQISIGDPTSPSSFLPWHQITFCLLIGLLFAIDTVLYFSVQRSLQSSVAVYEEPKLHWSKEPQDK.

Residues 1–20 form the signal peptide; that stretch reads MWYLLLPTALLLTVSSGVGA. The Extracellular segment spans residues 21-203; that stretch reads GLQKAVVNLD…SPSSFLPWHQ (183 aa). Ig-like C2-type domains lie at 31 to 103 and 117 to 188; these read PEWV…QLDV and FQEG…LQIS. 2 cysteine pairs are disulfide-bonded: Cys-46-Cys-88 and Cys-127-Cys-171. N-linked (GlcNAc...) asparagine glycosylation is found at Asn-55 and Asn-62. Asn-179 is a glycosylation site (N-linked (GlcNAc...) asparagine). The chain crosses the membrane as a helical span at residues 204 to 224; that stretch reads ITFCLLIGLLFAIDTVLYFSV. Residues 225–249 lie on the Cytoplasmic side of the membrane; sequence QRSLQSSVAVYEEPKLHWSKEPQDK. Tyr-235 is modified (phosphotyrosine).

As to quaternary structure, forms a heterooligomeric complex with ITAM-containing signaling subunits FCER1G. Interacts (via transmembrane domain) with signaling subunits; this interaction is a prerequisite for receptor complex expression on the cell surface and intracellular signal transduction. Binds the Fc region of antigen-complexed IgG. Post-translationally, N-glycosylated. In terms of processing, phosphorylated following receptor ligation.

It localises to the cell membrane. Its function is as follows. Receptor for the invariable Fc fragment of immunoglobulin gamma (IgG). Binds with intermediate affinity to both IgG2a and IgG2b. Can bind to IgG2a and IgG2b monomers. Does not display binding to IgG1 or IgG3. Recognizes neutralizing virus-specific IgGs displayed on the cell surface of infected cells and triggers antibody-dependent cellular cytotoxicity (ADCC). Confers protection to lethal influenza virus infection. On splenic dendritic cells, uptakes antigen immune complexes and efficiently divert them into MHC class I and II antigen presentation pathways to provide for superior priming of CD4-positive and CD8-positive T cell immune responses. Mediates neutrophil activation by IgG complexes redundantly with FCGR2A. Plays a role in promoting bone resorption by enhancing osteoclast differentiation following binding to IgG2a. Also acts as a receptor for the Fc region of immunoglobulin epsilon (IgE). Binds with low affinity to both the a and b allotypes of IgE. Has also been shown to bind to IgE allotype a only but not to allotype b. Binds aggregated IgE but not the monomeric form and bound monomeric IgG is readily displaced by IgE complexes. Binding to IgE promotes macrophage-mediated phagocytosis, antigen presentation to T cells, production of pro-inflammatory cytokines and the late phase of cutaneous allergic reactions. Mediates enhanced ADCC in response to afucosylated IgGs. The protein is Low affinity immunoglobulin gamma Fc region receptor III-A of Rattus norvegicus (Rat).